The sequence spans 398 residues: Argininosuccinate synthase (398 aa).

Position 9-17 (9-17) interacts with ATP; it reads AYSGGLDTS. Residue Tyr85 coordinates L-citrulline. Residue Gly115 participates in ATP binding. 3 residues coordinate L-aspartate: Thr117, Asn121, and Asp122. Asn121 provides a ligand contact to L-citrulline. Residues Arg125, Ser173, Glu258, and Tyr270 each coordinate L-citrulline.

Belongs to the argininosuccinate synthase family. Type 1 subfamily. In terms of assembly, homotetramer.

It localises to the cytoplasm. The enzyme catalyses L-citrulline + L-aspartate + ATP = 2-(N(omega)-L-arginino)succinate + AMP + diphosphate + H(+). It functions in the pathway amino-acid biosynthesis; L-arginine biosynthesis; L-arginine from L-ornithine and carbamoyl phosphate: step 2/3. The sequence is that of Argininosuccinate synthase from Streptococcus pneumoniae (strain ATCC BAA-255 / R6).